A 396-amino-acid polypeptide reads, in one-letter code: Tryptophan synthase beta chain (396 aa).

Position 86 is an N6-(pyridoxal phosphate)lysine (Lys-86).

This sequence belongs to the TrpB family. In terms of assembly, tetramer of two alpha and two beta chains. It depends on pyridoxal 5'-phosphate as a cofactor.

It carries out the reaction (1S,2R)-1-C-(indol-3-yl)glycerol 3-phosphate + L-serine = D-glyceraldehyde 3-phosphate + L-tryptophan + H2O. It functions in the pathway amino-acid biosynthesis; L-tryptophan biosynthesis; L-tryptophan from chorismate: step 5/5. Its function is as follows. The beta subunit is responsible for the synthesis of L-tryptophan from indole and L-serine. The polypeptide is Tryptophan synthase beta chain (Francisella tularensis subsp. tularensis (strain FSC 198)).